Here is a 359-residue protein sequence, read N- to C-terminus: 3-dehydroquinate synthase (359 aa).

NAD(+)-binding positions include 70 to 75 (DGEQYK), 105 to 109 (GVIGD), 129 to 130 (TT), Lys-142, Lys-151, and 169 to 172 (FYKT). Zn(2+) contacts are provided by Glu-184, His-247, and His-264.

It belongs to the sugar phosphate cyclases superfamily. Dehydroquinate synthase family. The cofactor is Co(2+). It depends on Zn(2+) as a cofactor. Requires NAD(+) as cofactor.

Its subcellular location is the cytoplasm. The enzyme catalyses 7-phospho-2-dehydro-3-deoxy-D-arabino-heptonate = 3-dehydroquinate + phosphate. It participates in metabolic intermediate biosynthesis; chorismate biosynthesis; chorismate from D-erythrose 4-phosphate and phosphoenolpyruvate: step 2/7. Functionally, catalyzes the conversion of 3-deoxy-D-arabino-heptulosonate 7-phosphate (DAHP) to dehydroquinate (DHQ). This chain is 3-dehydroquinate synthase, found in Francisella tularensis subsp. tularensis (strain WY96-3418).